The following is a 250-amino-acid chain: Hydroxyacylglutathione hydrolase (250 aa).

The Zn(2+) site is built by histidine 52, histidine 54, aspartate 56, histidine 57, histidine 107, aspartate 128, and histidine 166.

This sequence belongs to the metallo-beta-lactamase superfamily. Glyoxalase II family. In terms of assembly, monomer. Zn(2+) serves as cofactor.

It catalyses the reaction an S-(2-hydroxyacyl)glutathione + H2O = a 2-hydroxy carboxylate + glutathione + H(+). It functions in the pathway secondary metabolite metabolism; methylglyoxal degradation; (R)-lactate from methylglyoxal: step 2/2. Thiolesterase that catalyzes the hydrolysis of S-D-lactoyl-glutathione to form glutathione and D-lactic acid. The polypeptide is Hydroxyacylglutathione hydrolase (Neisseria gonorrhoeae (strain ATCC 700825 / FA 1090)).